Reading from the N-terminus, the 239-residue chain is DNA damage-regulated autophagy modulator protein 1 (239 aa).

Helical transmembrane passes span 15–35 (ILVIWSSAGFLFSYIISVLIG), 54–74 (SGVFGFMISVSAMLGAATMYT), 91–111 (IYFNKISLAIGLFGCIGMGIV), 119–139 (VPAVHDAGALITFICGVMYIL), 162–182 (MTVSLIAFIAVVPMSVFSILS), and 201–221 (TSAICEWTVAFGFNMYFLTFI).

The protein belongs to the DRAM/TMEM150 family.

It localises to the lysosome membrane. Functionally, lysosomal modulator of autophagy that plays a central role in p53/TP53-mediated apoptosis. The polypeptide is DNA damage-regulated autophagy modulator protein 1 (dram1) (Xenopus laevis (African clawed frog)).